Reading from the N-terminus, the 210-residue chain is Ribosomal RNA large subunit methyltransferase E (210 aa).

S-adenosyl-L-methionine contacts are provided by Gly-60, Trp-62, Asp-80, Asp-96, and Asp-121. The active-site Proton acceptor is Lys-161.

The protein belongs to the class I-like SAM-binding methyltransferase superfamily. RNA methyltransferase RlmE family.

It localises to the cytoplasm. The catalysed reaction is uridine(2552) in 23S rRNA + S-adenosyl-L-methionine = 2'-O-methyluridine(2552) in 23S rRNA + S-adenosyl-L-homocysteine + H(+). In terms of biological role, specifically methylates the uridine in position 2552 of 23S rRNA at the 2'-O position of the ribose in the fully assembled 50S ribosomal subunit. This chain is Ribosomal RNA large subunit methyltransferase E, found in Vesicomyosocius okutanii subsp. Calyptogena okutanii (strain HA).